The following is a 223-amino-acid chain: Membrane-associated progesterone receptor component 2 (223 aa).

The interval 1-33 (MAAGDGDVKLGTLGSGSESSNDGGSESPGDAGA) is disordered. Ser-15 carries an O-linked (Xyl...) (chondroitin sulfate) serine glycan. Low complexity predominate over residues 15–33 (SGSESSNDGGSESPGDAGA). Residues 42–66 (AAALALLTGGGEMLLNVALVALVLL) form a helical membrane-spanning segment. Residues Ser-90, Ser-104, and Ser-208 each carry the phosphoserine modification. One can recognise a Cytochrome b5 heme-binding domain in the interval 102–201 (DFSLEQLRQY…EKYDYVGRLL (100 aa)). Positions 202–223 (KPGEEPSEYTDEEDTKDHNKQD) are disordered. A compositionally biased stretch (acidic residues) spans 206-215 (EPSEYTDEED). Tyr-210 bears the Phosphotyrosine mark. Residue Thr-211 is modified to Phosphothreonine.

This sequence belongs to the cytochrome b5 family. MAPR subfamily. In terms of assembly, interacts with PGRMC1. Interacts with AAAS. In terms of tissue distribution, expressed by endometrial glands and stroma (at protein level). Detected in urine (at protein level).

It is found in the membrane. The protein resides in the nucleus envelope. Its subcellular location is the endoplasmic reticulum. It localises to the secreted. Required for the maintenance of uterine histoarchitecture and normal female reproductive lifespan. May serve as a universal non-classical progesterone receptor in the uterus. Intracellular heme chaperone required for delivery of labile, or signaling heme, to the nucleus. Plays a role in adipocyte function and systemic glucose homeostasis. In brown fat, which has a high demand for heme, delivery of labile heme in the nucleus regulates the activity of heme-responsive transcriptional repressors such as NR1D1 and BACH1. The polypeptide is Membrane-associated progesterone receptor component 2 (Homo sapiens (Human)).